The sequence spans 775 residues: Phosphoribosylformylglycinamidine synthase subunit PurL (775 aa).

Histidine 81 is an active-site residue. ATP-binding residues include tyrosine 84 and lysine 123. Position 125 (glutamate 125) interacts with Mg(2+). Substrate is bound by residues 126–129 (SHNH) and arginine 148. Histidine 127 serves as the catalytic Proton acceptor. Aspartate 149 is a Mg(2+) binding site. Substrate is bound at residue glutamine 272. Aspartate 300 is a Mg(2+) binding site. 344 to 346 (ESQ) lines the substrate pocket. ATP is bound by residues aspartate 525 and glycine 562. Asparagine 563 contacts Mg(2+). Serine 565 serves as a coordination point for substrate.

The protein belongs to the FGAMS family. Monomer. Part of the FGAM synthase complex composed of 1 PurL, 1 PurQ and 2 PurS subunits.

The protein resides in the cytoplasm. The enzyme catalyses N(2)-formyl-N(1)-(5-phospho-beta-D-ribosyl)glycinamide + L-glutamine + ATP + H2O = 2-formamido-N(1)-(5-O-phospho-beta-D-ribosyl)acetamidine + L-glutamate + ADP + phosphate + H(+). The protein operates within purine metabolism; IMP biosynthesis via de novo pathway; 5-amino-1-(5-phospho-D-ribosyl)imidazole from N(2)-formyl-N(1)-(5-phospho-D-ribosyl)glycinamide: step 1/2. Functionally, part of the phosphoribosylformylglycinamidine synthase complex involved in the purines biosynthetic pathway. Catalyzes the ATP-dependent conversion of formylglycinamide ribonucleotide (FGAR) and glutamine to yield formylglycinamidine ribonucleotide (FGAM) and glutamate. The FGAM synthase complex is composed of three subunits. PurQ produces an ammonia molecule by converting glutamine to glutamate. PurL transfers the ammonia molecule to FGAR to form FGAM in an ATP-dependent manner. PurS interacts with PurQ and PurL and is thought to assist in the transfer of the ammonia molecule from PurQ to PurL. The chain is Phosphoribosylformylglycinamidine synthase subunit PurL from Agrobacterium fabrum (strain C58 / ATCC 33970) (Agrobacterium tumefaciens (strain C58)).